A 291-amino-acid chain; its full sequence is Beta-lactamase CTX-M-14 (291 aa).

The signal sequence occupies residues 1–28 (MVTKRVQRMMFAAAACIPLLLGSAPLYA). Serine 73 serves as the catalytic Nucleophile; acyl-ester intermediate. A beta-lactam-binding residues include lysine 76, serine 133, glutamate 169, and serine 240.

It belongs to the class-A beta-lactamase family. Monomer.

The protein localises to the secreted. The catalysed reaction is a beta-lactam + H2O = a substituted beta-amino acid. Its activity is regulated as follows. Inhibited by the beta-lactamase-blocking agents clavulanic acid, tazobactam and sulbactam. Its function is as follows. Extended-spectrum beta-lactamase (ESBL) which confers resistance to penicillins, as well as first, second, and third-generation cephalosporins. Has cefotaxime-hydrolyzing activity. The sequence is that of Beta-lactamase CTX-M-14 from Escherichia coli.